A 205-amino-acid polypeptide reads, in one-letter code: Small ribosomal subunit protein uS4 (205 aa).

The disordered stretch occupies residues 20 to 47; the sequence is WGRSKSPLNRGKENPPGQHGQRRKKPSD. Residues 94–154 form the S4 RNA-binding domain; it reads CRLDAVVYRL…TKSKDMALIL (61 aa).

Belongs to the universal ribosomal protein uS4 family. In terms of assembly, part of the 30S ribosomal subunit. Contacts protein S5. The interaction surface between S4 and S5 is involved in control of translational fidelity.

Its function is as follows. One of the primary rRNA binding proteins, it binds directly to 16S rRNA where it nucleates assembly of the body of the 30S subunit. With S5 and S12 plays an important role in translational accuracy. The chain is Small ribosomal subunit protein uS4 from Paramagnetospirillum magneticum (strain ATCC 700264 / AMB-1) (Magnetospirillum magneticum).